Reading from the N-terminus, the 368-residue chain is L-arabinitol 4-dehydrogenase (368 aa).

Zn(2+) contacts are provided by Cys52, His77, Glu78, Cys107, Cys110, Cys113, Cys121, and Glu162. NAD(+) contacts are provided by Asp210, Arg215, and Ile282.

The protein belongs to the zinc-containing alcohol dehydrogenase family. In terms of assembly, homotetramer. Requires Zn(2+) as cofactor.

It catalyses the reaction L-arabinitol + NAD(+) = L-xylulose + NADH + H(+). Its function is as follows. Plays a key role in liamocins biosynthesis by providing the arabinol moity that is linked to 3,5-dihydroxydecanoic acid (provided by the HR-PKS PKS1) via ester bond formation catalyzed by the esterase EST1. The protein is L-arabinitol 4-dehydrogenase of Aureobasidium melanogenum (Aureobasidium pullulans var. melanogenum).